Reading from the N-terminus, the 953-residue chain is 26S proteasome non-ATPase regulatory subunit 1 (953 aa).

N-acetylmethionine is present on M1. T273 carries the post-translational modification Phosphothreonine. The tract at residues 279–318 is disordered; it reads PGSTNTGTVPGSEKDSDSMETEEKTSSAFVGKTPEASPEP. S290 carries the post-translational modification Phosphoserine. The segment covering 290–303 has biased composition (basic and acidic residues); sequence SEKDSDSMETEEKT. K310 carries the post-translational modification N6-acetyllysine. T311 bears the Phosphothreonine mark. A Phosphoserine modification is found at S315. PC repeat units lie at residues 403–436, 441–474, 476–510, 511–545, 547–580, 581–616, 617–649, 651–685, 686–726, and 729–761; these read TATA…PGSA, GGLY…DIVR, GGSL…VTGE, AAGL…EKIL, GLAV…ILRR, SGMY…DVRR, AAVE…PHVR, GAAM…YVRQ, GALI…DVMA, and GAIL…PSVV. Residue K720 is modified to N6-acetyllysine. T830 bears the Phosphothreonine mark. S834 is modified (phosphoserine). Disordered regions lie at residues 839–881 and 930–953; these read AKKK…LDNP and AHGP…YIDD. Basic and acidic residues-rich tracts occupy residues 842 to 852 and 859 to 872; these read KEKEKEKKEEE and AEKK…KEPE. A compositionally biased stretch (acidic residues) spans 936–953; that stretch reads EEEEQEPEPPEPFEYIDD.

This sequence belongs to the proteasome subunit S1 family. As to quaternary structure, component of the 19S proteasome regulatory particle complex. The 26S proteasome consists of a 20S core particle (CP) and two 19S regulatory subunits (RP). The regulatory particle is made of a lid composed of 9 subunits, a base containing 6 ATPases and few additional components including PSMD1. Interacts with ADRM1. Interacts with ZFAND1.

Component of the 26S proteasome, a multiprotein complex involved in the ATP-dependent degradation of ubiquitinated proteins. This complex plays a key role in the maintenance of protein homeostasis by removing misfolded or damaged proteins, which could impair cellular functions, and by removing proteins whose functions are no longer required. Therefore, the proteasome participates in numerous cellular processes, including cell cycle progression, apoptosis, or DNA damage repair. This chain is 26S proteasome non-ATPase regulatory subunit 1 (PSMD1), found in Homo sapiens (Human).